The sequence spans 229 residues: Cytochrome c oxidase subunit 2 (229 aa).

Residues 1–26 lie on the Mitochondrial intermembrane side of the membrane; the sequence is MSTWANLGLQDSASPLMEQLIFFHDH. A helical transmembrane segment spans residues 27–48; that stretch reads ALLILVMITVLVGYLMFMLFFN. Residues 49-62 lie on the Mitochondrial matrix side of the membrane; it reads SYVNRFLLHGQLIE. A helical membrane pass occupies residues 63 to 82; it reads MIWTILPAIILLFIAMPSLR. Residues 83-229 lie on the Mitochondrial intermembrane side of the membrane; that stretch reads LLYLLDEINE…IKWISNSVNS (147 aa). Residues H161, C196, E198, C200, H204, and M207 each contribute to the Cu cation site. Residue E198 coordinates Mg(2+).

Belongs to the cytochrome c oxidase subunit 2 family. Component of the cytochrome c oxidase (complex IV, CIV), a multisubunit enzyme composed of a catalytic core of 3 subunits and several supernumerary subunits. The complex exists as a monomer or a dimer and forms supercomplexes (SCs) in the inner mitochondrial membrane with ubiquinol-cytochrome c oxidoreductase (cytochrome b-c1 complex, complex III, CIII). Cu cation serves as cofactor.

It localises to the mitochondrion inner membrane. The enzyme catalyses 4 Fe(II)-[cytochrome c] + O2 + 8 H(+)(in) = 4 Fe(III)-[cytochrome c] + 2 H2O + 4 H(+)(out). In terms of biological role, component of the cytochrome c oxidase, the last enzyme in the mitochondrial electron transport chain which drives oxidative phosphorylation. The respiratory chain contains 3 multisubunit complexes succinate dehydrogenase (complex II, CII), ubiquinol-cytochrome c oxidoreductase (cytochrome b-c1 complex, complex III, CIII) and cytochrome c oxidase (complex IV, CIV), that cooperate to transfer electrons derived from NADH and succinate to molecular oxygen, creating an electrochemical gradient over the inner membrane that drives transmembrane transport and the ATP synthase. Cytochrome c oxidase is the component of the respiratory chain that catalyzes the reduction of oxygen to water. Electrons originating from reduced cytochrome c in the intermembrane space (IMS) are transferred via the dinuclear copper A center (CU(A)) of subunit 2 and heme A of subunit 1 to the active site in subunit 1, a binuclear center (BNC) formed by heme A3 and copper B (CU(B)). The BNC reduces molecular oxygen to 2 water molecules using 4 electrons from cytochrome c in the IMS and 4 protons from the mitochondrial matrix. The chain is Cytochrome c oxidase subunit 2 (mt:CoII) from Drosophila ambigua (Fruit fly).